Reading from the N-terminus, the 427-residue chain is Glutamyl-tRNA reductase (427 aa).

Residues threonine 49–arginine 52, serine 101, glutamate 106–glutamine 108, and glutamine 112 each bind substrate. Residue cysteine 50 is the Nucleophile of the active site. Residue glycine 181–isoleucine 186 coordinates NADP(+). The interval phenylalanine 407–proline 427 is disordered. The span at valine 418–proline 427 shows a compositional bias: basic and acidic residues.

It belongs to the glutamyl-tRNA reductase family. In terms of assembly, homodimer.

The catalysed reaction is (S)-4-amino-5-oxopentanoate + tRNA(Glu) + NADP(+) = L-glutamyl-tRNA(Glu) + NADPH + H(+). It participates in porphyrin-containing compound metabolism; protoporphyrin-IX biosynthesis; 5-aminolevulinate from L-glutamyl-tRNA(Glu): step 1/2. In terms of biological role, catalyzes the NADPH-dependent reduction of glutamyl-tRNA(Glu) to glutamate 1-semialdehyde (GSA). The protein is Glutamyl-tRNA reductase of Stenotrophomonas maltophilia (strain R551-3).